Here is a 195-residue protein sequence, read N- to C-terminus: Probable GTP-binding protein EngB (195 aa).

Residues 24 to 195 enclose the EngB-type G domain; sequence ELPEIALAGR…EAWDAILEKL (172 aa). GTP is bound by residues 32–39, 59–63, 77–80, 144–147, and 176–178; these read GRSNVGKS, GKTQL, DVPG, TKAD, and FSS. Positions 39 and 61 each coordinate Mg(2+).

This sequence belongs to the TRAFAC class TrmE-Era-EngA-EngB-Septin-like GTPase superfamily. EngB GTPase family. The cofactor is Mg(2+).

In terms of biological role, necessary for normal cell division and for the maintenance of normal septation. The protein is Probable GTP-binding protein EngB of Streptococcus pneumoniae (strain ATCC 700669 / Spain 23F-1).